Here is a 202-residue protein sequence, read N- to C-terminus: Small ribosomal subunit protein uS4 (202 aa).

In terms of domain architecture, S4 RNA-binding spans 91-154 (SMLSSVLYNS…VNLPSVLAAI (64 aa)).

This sequence belongs to the universal ribosomal protein uS4 family. Part of the 30S ribosomal subunit. Contacts protein S5. The interaction surface between S4 and S5 is involved in control of translational fidelity.

Its function is as follows. One of the primary rRNA binding proteins, it binds directly to 16S rRNA where it nucleates assembly of the body of the 30S subunit. In terms of biological role, with S5 and S12 plays an important role in translational accuracy. The chain is Small ribosomal subunit protein uS4 from Ehrlichia ruminantium (strain Gardel).